The primary structure comprises 319 residues: mRNA decay activator protein ZFP36 (319 aa).

Residues 1–15 form a necessary for nuclear export region; that stretch reads MDLSAIYESLQSMSH. The tract at residues 1-92 is necessary and sufficient for the association with mRNA decay enzymes and mRNA decay activation; the sequence is MDLSAIYESL…PTSPTATPTT (92 aa). Necessary for localization of ARE-containing mRNAs to processing bodies (PBs) stretches follow at residues 1 to 166 and 92 to 319; these read MDLS…DLAL and TSSR…SVSE. Ser52 bears the Phosphoserine; by MAPKAPK2 mark. Phosphoserine is present on Ser58. Residues 63–67 form a P-P-P-P-G repeat; the sequence is PPPPG. A compositionally biased stretch (pro residues) spans 65–84; that stretch reads PPGFAPLAPRPGPELSPSPT. The disordered stretch occupies residues 65–95; sequence PPGFAPLAPRPGPELSPSPTSPTATPTTSSR. Phosphoserine occurs at positions 80 and 82. Phosphothreonine is present on Thr84. Ser85 is subject to Phosphoserine. The span at 85–94 shows a compositional bias: low complexity; the sequence is SPTATPTTSS. The necessary for nuclear localization stretch occupies residues 87–160; sequence TATPTTSSRY…GSRCHFIHNP (74 aa). Residues 89-165 form a necessary for RNA-binding region; that stretch reads TPTTSSRYKT…FIHNPTEDLA (77 aa). C3H1-type zinc fingers lie at residues 95-123 and 133-161; these read RYKTELCRTYSESGRCRYGAKCQFAHGLG and KYKTELCHKFYLQGRCPYGSRCHFIHNPT. Positions 95 to 186 are necessary for interaction with PABPN1; the sequence is RYKTELCRTY…ISFSGLPSGR (92 aa). A necessary for mRNA decay activation region spans residues 166 to 319; it reads LPGQPHVLRQ…PIFNRISVSE (154 aa). Phosphoserine; by MAPKAPK2 is present on Ser178. The segment covering 179 to 188 has biased composition (low complexity); it reads FSGLPSGRRS. The tract at residues 179–309 is disordered; that stretch reads FSGLPSGRRS…PQTPAPPRRL (131 aa). Ser189 carries the post-translational modification Phosphoserine. The P-P-P-P-G repeat unit spans residues 190–194; that stretch reads PPPPG. Low complexity predominate over residues 196–208; it reads SGPSLSSCSFSPS. Ser210 carries the post-translational modification Phosphoserine. The P-P-P-P-G repeat unit spans residues 211 to 215; sequence PPPPG. Ser220 carries the phosphoserine; by MAPK1; in vitro modification. Thr250 carries the phosphothreonine modification. Phosphoserine occurs at positions 269, 289, and 316. The span at 279–289 shows a compositional bias: low complexity; the sequence is SSGSSLGGSDS. The interaction with CNOT1 stretch occupies residues 305–319; that stretch reads PPRRLPIFNRISVSE.

Associates with cytoplasmic CCR4-NOT and PAN2-PAN3 deadenylase complexes to trigger ARE-containing mRNA deadenylation and decay processes. Part of a mRNA decay activation complex at least composed of poly(A)-specific exoribonucleases CNOT6, EXOSC2 and XRN1 and mRNA-decapping enzymes DCP1A and DCP2. Associates with the RNA exosome complex. Interacts (via phosphorylated form) with 14-3-3 proteins; these interactions promote exclusion of ZFP36 from cytoplasmic stress granules in response to arsenite treatment in a MAPKAPK2-dependent manner and does not prevent CCR4-NOT deadenylase complex recruitment or ZFP36-induced ARE-containing mRNA deadenylation and decay processes. Interacts with 14-3-3 proteins; these interactions occur in response to rapamycin in an Akt-dependent manner. Interacts with AGO2 and AGO4. Interacts (via C-terminus) with CNOT1; this interaction occurs in a RNA-independent manner and induces mRNA deadenylation. Interacts (via N-terminus) with CNOT6. Interacts with CNOT6L. Interacts (via C-terminus) with CNOT7; this interaction occurs in a RNA-independent manner, induces mRNA deadenylation and is inhibited in a phosphorylation MAPKAPK2-dependent manner. Interacts (via unphosphorylated form) with CNOT8; this interaction occurs in a RNA-independent manner and is inhibited in a phosphorylation MAPKAPK2-dependent manner. Interacts with DCP1A. Interacts (via N-terminus) with DCP2. Interacts with EDC3. Interacts (via N-terminus) with EXOSC2. Interacts with heat shock 70 kDa proteins. Interacts with KHSRP; this interaction increases upon cytokine-induced treatment. Interacts with MAP3K4; this interaction enhances the association with SH3KBP1/CIN85. Interacts with MAPKAPK2; this interaction occurs upon skeletal muscle satellite cell activation. Interacts with NCL. Interacts with NUP214; this interaction increases upon lipopolysaccharide (LPS) stimulation. Interacts with PABPC1; this interaction occurs in a RNA-dependent manner. Interacts (via hypophosphorylated form) with PABPN1 (via RRM domain and C-terminal arginine-rich region); this interaction occurs in the nucleus in a RNA-independent manner, decreases in presence of single-stranded poly(A) RNA-oligomer and in a p38 MAPK-dependent-manner and inhibits nuclear poly(A) tail synthesis. Interacts with PAN2. Interacts (via C3H1-type zinc finger domains) with PKM. Interacts (via C3H1-type zinc finger domains) with nuclear RNA poly(A) polymerase. Interacts with PPP2CA; this interaction occurs in LPS-stimulated cells and induces ZFP36 dephosphorylation, and hence may promote ARE-containing mRNAs decay. Interacts (via C-terminus) with PRR5L (via C-terminus); this interaction may accelerate ZFP36-mediated mRNA decay during stress. Interacts (via C-terminus) with SFN; this interaction occurs in a phosphorylation-dependent manner. Interacts (via extreme C-terminal region) with SH3KBP1/CIN85 (via SH3 domains); this interaction enhances MAP3K4-induced phosphorylation of ZFP36 at Ser-58 and Ser-85 and does not alter neither ZFP36 binding to ARE-containing transcripts nor TNF-alpha mRNA decay. Interacts with XRN1. Interacts (via C-terminus and Ser-178 phosphorylated form) with YWHAB; this interaction occurs in a p38/MAPKAPK2-dependent manner, increases cytoplasmic localization of ZFP36 and protects ZFP36 from Ser-178 dephosphorylation by serine/threonine phosphatase 2A, and hence may be crucial for stabilizing ARE-containing mRNAs. Interacts (via phosphorylated form) with YWHAE. Interacts (via C-terminus) with YWHAG; this interaction occurs in a phosphorylation-dependent manner. Interacts with YWHAH; this interaction occurs in a phosphorylation-dependent manner. Interacts with YWHAQ; this interaction occurs in a phosphorylation-dependent manner. Interacts with (via C-terminus) YWHAZ; this interaction occurs in a phosphorylation-dependent manner. Does not interact with SH3KBP1. Interacts (via the 4EHP-binding motif) with EIF4E2; the interaction is direct. Interacts (via P-P-P-P-G repeats) with GIGYF2; the interaction is direct. In terms of processing, phosphorylated. Phosphorylation at serine and/or threonine residues occurs in a p38 MAPK- and MAPKAPK2-dependent manner. Phosphorylated by MAPKAPK2 at Ser-52 and Ser-178; phosphorylation increases its stability and cytoplasmic localization, promotes binding to 14-3-3 adapter proteins and inhibits the recruitment of cytoplasmic CCR4-NOT and PAN2-PAN3 deadenylase complexes to the mRNA decay machinery, thereby inhibiting ZFP36-induced ARE-containing mRNA deadenylation and decay processes. Phosphorylation by MAPKAPK2 does not impair ARE-containing RNA-binding. Phosphorylated in a MAPKAPK2- and p38 MAPK-dependent manner upon skeletal muscle satellite cell activation; this phosphorylation inhibits ZFP36-mediated mRNA decay activity, and hence stabilizes MYOD1 mRNA. Phosphorylated by MAPK1 upon mitogen stimulation. Phosphorylated at Ser-58 and Ser-85; these phosphorylations increase in a SH3KBP1-dependent manner. Phosphorylated at serine and threonine residues in a pyruvate kinase PKM- and p38 MAPK-dependent manner. Phosphorylation at Ser-52 may participate in the PKM-mediated degradation of ZFP36 in a p38 MAPK-dependent manner. Dephosphorylated by serine/threonine phosphatase 2A at Ser-178. Post-translationally, ubiquitinated; pyruvate kinase (PKM)-dependent ubiquitination leads to proteasomal degradation through a p38 MAPK signaling pathway. As to expression, expressed in skeletal muscle satellite cells. Strongly expressed in differentiated adipocytes compared to preadipocytes (at protein level). Expressed in embryonic stem cells (ESCs). Expressed in heart, placenta, kidney, intestine, liver, lung, thymus, fat and spleen.

Its subcellular location is the nucleus. The protein localises to the cytoplasm. It is found in the cytoplasmic granule. The protein resides in the P-body. Functionally, zinc-finger RNA-binding protein that destabilizes numerous cytoplasmic AU-rich element (ARE)-containing mRNA transcripts by promoting their poly(A) tail removal or deadenylation, and hence provide a mechanism for attenuating protein synthesis. Acts as an 3'-untranslated region (UTR) ARE mRNA-binding adapter protein to communicate signaling events to the mRNA decay machinery. Recruits deadenylase CNOT7 (and probably the CCR4-NOT complex) via association with CNOT1, and hence promotes ARE-mediated mRNA deadenylation. Also functions by recruiting components of the cytoplasmic RNA decay machinery to the bound ARE-containing mRNAs. Self-regulates by destabilizing its own mRNA. Binds to 3'-UTR ARE of numerous mRNAs and of its own mRNA. Plays a role in anti-inflammatory responses; suppresses tumor necrosis factor (TNF)-alpha production by stimulating ARE-mediated TNF-alpha mRNA decay and several other inflammatory ARE-containing mRNAs in interferon (IFN)- and/or lipopolysaccharide (LPS)-induced macrophages. Also plays a role in the regulation of dendritic cell maturation at the post-transcriptional level, and hence operates as part of a negative feedback loop to limit the inflammatory response. Promotes ARE-mediated mRNA decay of hypoxia-inducible factor HIF1A mRNA during the response of endothelial cells to hypoxia. Positively regulates early adipogenesis of preadipocytes by promoting ARE-mediated mRNA decay of immediate early genes (IEGs). Negatively regulates hematopoietic/erythroid cell differentiation by promoting ARE-mediated mRNA decay of the transcription factor STAT5B mRNA. Plays a role in maintaining skeletal muscle satellite cell quiescence by promoting ARE-mediated mRNA decay of the myogenic determination factor MYOD1 mRNA. Also associates with and regulates the expression of non-ARE-containing target mRNAs at the post-transcriptional level, such as MHC class I mRNAs. Participates in association with argonaute RISC catalytic components in the ARE-mediated mRNA decay mechanism; assists microRNA (miRNA) targeting ARE-containing mRNAs. May also play a role in the regulation of cytoplasmic mRNA decapping; enhances decapping of ARE-containing RNAs, in vitro. Involved in the delivery of target ARE-mRNAs to processing bodies (PBs). In addition to its cytosolic mRNA-decay function, affects nuclear pre-mRNA processing. Negatively regulates nuclear poly(A)-binding protein PABPN1-stimulated polyadenylation activity on ARE-containing pre-mRNA during LPS-stimulated macrophages. Also involved in the regulation of stress granule (SG) and P-body (PB) formation and fusion. Plays a role in the regulation of keratinocyte proliferation, differentiation and apoptosis. Plays a role as a tumor suppressor by inhibiting cell proliferation in breast cancer cells. The chain is mRNA decay activator protein ZFP36 from Mus musculus (Mouse).